A 516-amino-acid polypeptide reads, in one-letter code: Putative GTP-binding protein 6 (516 aa).

Residues 18 to 39 (GRGRSAPRAAAPSCPARALAAV) show a composition bias toward low complexity. A disordered region spans residues 18-82 (GRGRSAPRAA…PEDADENAEE (65 aa)). Over residues 57–67 (LRADGGRSRTG) the composition is skewed to basic and acidic residues. Residues 68–82 (DDEEEPEDADENAEE) show a composition bias toward acidic residues. The 165-residue stretch at 295–459 (PVISVVGYTN…ELDAAVLKAT (165 aa)) folds into the Hflx-type G domain. GTP is bound by residues 301–308 (GYTNCGKT), 327–331 (FATLD), 349–352 (DTIG), 418–421 (NKVD), and 437–439 (SAL). 2 residues coordinate Mg(2+): Thr-308 and Thr-329.

The protein belongs to the TRAFAC class OBG-HflX-like GTPase superfamily. HflX GTPase family. Mg(2+) serves as cofactor. As to expression, ubiquitously expressed.

This is Putative GTP-binding protein 6 (GTPBP6) from Homo sapiens (Human).